Here is a 383-residue protein sequence, read N- to C-terminus: S-adenosylmethionine synthase 1 (383 aa).

Residue His15 coordinates ATP. Asp17 contacts Mg(2+). Glu43 contacts K(+). 2 residues coordinate L-methionine: Glu56 and Gln99. Residues 99-109 form a flexible loop region; sequence QSPDIDLGVSR. ATP-binding positions include 162–164, 228–229, Asp237, 243–244, Ala260, and Lys264; these read DGK, RF, and RK. Asp237 lines the L-methionine pocket. Position 268 (Lys268) interacts with L-methionine.

The protein belongs to the AdoMet synthase family. As to quaternary structure, homotetramer; dimer of dimers. Mg(2+) is required as a cofactor. K(+) serves as cofactor.

The protein localises to the cytoplasm. The catalysed reaction is L-methionine + ATP + H2O = S-adenosyl-L-methionine + phosphate + diphosphate. It functions in the pathway amino-acid biosynthesis; S-adenosyl-L-methionine biosynthesis; S-adenosyl-L-methionine from L-methionine: step 1/1. Catalyzes the formation of S-adenosylmethionine (AdoMet) from methionine and ATP. The overall synthetic reaction is composed of two sequential steps, AdoMet formation and the subsequent tripolyphosphate hydrolysis which occurs prior to release of AdoMet from the enzyme. This Rhodospirillum rubrum (strain ATCC 11170 / ATH 1.1.1 / DSM 467 / LMG 4362 / NCIMB 8255 / S1) protein is S-adenosylmethionine synthase 1.